A 294-amino-acid polypeptide reads, in one-letter code: tRNA dimethylallyltransferase (294 aa).

10–17 contributes to the ATP binding site; the sequence is GPTAVGKT. Position 12–17 (12–17) interacts with substrate; the sequence is TAVGKT. Residues 35 to 38 form an interaction with substrate tRNA region; it reads DSQQ.

This sequence belongs to the IPP transferase family. In terms of assembly, monomer. The cofactor is Mg(2+).

The catalysed reaction is adenosine(37) in tRNA + dimethylallyl diphosphate = N(6)-dimethylallyladenosine(37) in tRNA + diphosphate. Functionally, catalyzes the transfer of a dimethylallyl group onto the adenine at position 37 in tRNAs that read codons beginning with uridine, leading to the formation of N6-(dimethylallyl)adenosine (i(6)A). This Streptococcus pneumoniae (strain ATCC 700669 / Spain 23F-1) protein is tRNA dimethylallyltransferase.